The chain runs to 319 residues: Tyrosine--tRNA ligase (319 aa).

Tyr-35 is a binding site for L-tyrosine. The 'HIGH' region signature appears at 40-48 (PSGKIHLGH). L-tyrosine contacts are provided by Tyr-156, Gln-160, Asp-163, and Gln-178. A 'KMSKS' region motif is present at residues 213–217 (KMSSS). Ser-216 is an ATP binding site.

It belongs to the class-I aminoacyl-tRNA synthetase family. TyrS type 3 subfamily. In terms of assembly, homodimer.

It localises to the cytoplasm. The enzyme catalyses tRNA(Tyr) + L-tyrosine + ATP = L-tyrosyl-tRNA(Tyr) + AMP + diphosphate + H(+). Catalyzes the attachment of tyrosine to tRNA(Tyr) in a two-step reaction: tyrosine is first activated by ATP to form Tyr-AMP and then transferred to the acceptor end of tRNA(Tyr). The chain is Tyrosine--tRNA ligase from Methanobrevibacter smithii (strain ATCC 35061 / DSM 861 / OCM 144 / PS).